The following is a 167-amino-acid chain: EF-hand calcium-binding domain-containing protein 11 (167 aa).

3 EF-hand domains span residues 17–52 (AERK…LFGY), 91–126 (DPYE…VAPR), and 127–162 (LQER…GLAN). Positions 140, 142, 144, 146, and 151 each coordinate Ca(2+).

This chain is EF-hand calcium-binding domain-containing protein 11 (efcab11), found in Danio rerio (Zebrafish).